We begin with the raw amino-acid sequence, 592 residues long: Aspartate--tRNA ligase (592 aa).

Position 171 (Glu-171) interacts with L-aspartate. The segment at 195-198 (QLFK) is aspartate. Residue Arg-217 coordinates L-aspartate. ATP contacts are provided by residues 217–219 (RDE) and Gln-226. His-448 provides a ligand contact to L-aspartate. Glu-482 contributes to the ATP binding site. Arg-489 is a binding site for L-aspartate. 534-537 (GLDR) contacts ATP.

This sequence belongs to the class-II aminoacyl-tRNA synthetase family. Type 1 subfamily. In terms of assembly, homodimer.

It is found in the cytoplasm. The catalysed reaction is tRNA(Asp) + L-aspartate + ATP = L-aspartyl-tRNA(Asp) + AMP + diphosphate. In terms of biological role, catalyzes the attachment of L-aspartate to tRNA(Asp) in a two-step reaction: L-aspartate is first activated by ATP to form Asp-AMP and then transferred to the acceptor end of tRNA(Asp). This Vibrio campbellii (strain ATCC BAA-1116) protein is Aspartate--tRNA ligase.